Reading from the N-terminus, the 162-residue chain is NADH-quinone oxidoreductase subunit I (162 aa).

2 consecutive 4Fe-4S ferredoxin-type domains span residues 52–82 and 93–122; these read LRRY…IEAG and TRYD…EGPN. Positions 62, 65, 68, 72, 102, 105, 108, and 112 each coordinate [4Fe-4S] cluster.

This sequence belongs to the complex I 23 kDa subunit family. In terms of assembly, NDH-1 is composed of 14 different subunits. Subunits NuoA, H, J, K, L, M, N constitute the membrane sector of the complex. [4Fe-4S] cluster is required as a cofactor.

It is found in the cell inner membrane. It carries out the reaction a quinone + NADH + 5 H(+)(in) = a quinol + NAD(+) + 4 H(+)(out). Functionally, NDH-1 shuttles electrons from NADH, via FMN and iron-sulfur (Fe-S) centers, to quinones in the respiratory chain. The immediate electron acceptor for the enzyme in this species is believed to be ubiquinone. Couples the redox reaction to proton translocation (for every two electrons transferred, four hydrogen ions are translocated across the cytoplasmic membrane), and thus conserves the redox energy in a proton gradient. This chain is NADH-quinone oxidoreductase subunit I, found in Methylorubrum populi (strain ATCC BAA-705 / NCIMB 13946 / BJ001) (Methylobacterium populi).